A 179-amino-acid polypeptide reads, in one-letter code: Large ribosomal subunit protein uL5 (179 aa).

Belongs to the universal ribosomal protein uL5 family. In terms of assembly, part of the 50S ribosomal subunit; part of the 5S rRNA/L5/L18/L25 subcomplex. Contacts the 5S rRNA and the P site tRNA. Forms a bridge to the 30S subunit in the 70S ribosome.

In terms of biological role, this is one of the proteins that bind and probably mediate the attachment of the 5S RNA into the large ribosomal subunit, where it forms part of the central protuberance. In the 70S ribosome it contacts protein S13 of the 30S subunit (bridge B1b), connecting the 2 subunits; this bridge is implicated in subunit movement. Contacts the P site tRNA; the 5S rRNA and some of its associated proteins might help stabilize positioning of ribosome-bound tRNAs. This is Large ribosomal subunit protein uL5 from Desulforapulum autotrophicum (strain ATCC 43914 / DSM 3382 / VKM B-1955 / HRM2) (Desulfobacterium autotrophicum).